The sequence spans 217 residues: Probable coenzyme A transferase subunit beta (217 aa).

Residue Glu50 is part of the active site.

The protein belongs to the 3-oxoacid CoA-transferase subunit B family. As to quaternary structure, heterodimer of a subunit alpha and a subunit beta.

This chain is Probable coenzyme A transferase subunit beta (yodR), found in Bacillus subtilis (strain 168).